Consider the following 248-residue polypeptide: Ubiquinone biosynthesis O-methyltransferase (248 aa).

Residues arginine 41, glycine 72, aspartate 93, and methionine 136 each coordinate S-adenosyl-L-methionine.

It belongs to the methyltransferase superfamily. UbiG/COQ3 family.

The enzyme catalyses a 3-demethylubiquinol + S-adenosyl-L-methionine = a ubiquinol + S-adenosyl-L-homocysteine + H(+). It carries out the reaction a 3-(all-trans-polyprenyl)benzene-1,2-diol + S-adenosyl-L-methionine = a 2-methoxy-6-(all-trans-polyprenyl)phenol + S-adenosyl-L-homocysteine + H(+). Its pathway is cofactor biosynthesis; ubiquinone biosynthesis. Functionally, O-methyltransferase that catalyzes the 2 O-methylation steps in the ubiquinone biosynthetic pathway. The sequence is that of Ubiquinone biosynthesis O-methyltransferase from Rhizobium etli (strain CIAT 652).